The primary structure comprises 258 residues: Acetylglutamate kinase (258 aa).

Residues 41-42 (GG), Arg-63, and Asn-156 contribute to the substrate site.

It belongs to the acetylglutamate kinase family. ArgB subfamily.

The protein localises to the cytoplasm. It catalyses the reaction N-acetyl-L-glutamate + ATP = N-acetyl-L-glutamyl 5-phosphate + ADP. It functions in the pathway amino-acid biosynthesis; L-arginine biosynthesis; N(2)-acetyl-L-ornithine from L-glutamate: step 2/4. Catalyzes the ATP-dependent phosphorylation of N-acetyl-L-glutamate. This chain is Acetylglutamate kinase, found in Bacillus pumilus (strain SAFR-032).